The sequence spans 145 residues: UPF0310 protein Mvan_0064 (145 aa).

It belongs to the UPF0310 family.

This chain is UPF0310 protein Mvan_0064, found in Mycolicibacterium vanbaalenii (strain DSM 7251 / JCM 13017 / BCRC 16820 / KCTC 9966 / NRRL B-24157 / PYR-1) (Mycobacterium vanbaalenii).